Here is a 119-residue protein sequence, read N- to C-terminus: Phospholipase A2 A2-actitoxin-Cgg2a (119 aa).

Disulfide bonds link C25/C119, C27/C43, C42/C101, C49/C94, C61/C87, and C78/C92. Ca(2+) contacts are provided by G28 and G30. Residue H46 is part of the active site. Position 47 (D47) interacts with Ca(2+). Residue D95 is part of the active site.

The protein belongs to the phospholipase A2 family. As to quaternary structure, homodimer. Ca(2+) serves as cofactor.

It is found in the secreted. It localises to the nematocyst. It catalyses the reaction a 1,2-diacyl-sn-glycero-3-phosphocholine + H2O = a 1-acyl-sn-glycero-3-phosphocholine + a fatty acid + H(+). In terms of biological role, sea anemone phospholipase A2 (PLA2). When incubated with plasma, this protein shows a moderate anticoagulant activity (0.15 ug of enzyme/200 uL of plasma), inhibiting clotting induced by thrombin. This enzyme also induces myotoxicity, and edema. PLA2 catalyzes the calcium-dependent hydrolysis of the 2-acyl groups in 3-sn-phosphoglycerides. The protein is Phospholipase A2 A2-actitoxin-Cgg2a of Condylactis gigantea (Giant Caribbean anemone).